Consider the following 122-residue polypeptide: Small ribosomal subunit protein uS13 (122 aa).

The tract at residues Arg-93–Lys-122 is disordered.

This sequence belongs to the universal ribosomal protein uS13 family. As to quaternary structure, part of the 30S ribosomal subunit. Forms a loose heterodimer with protein S19. Forms two bridges to the 50S subunit in the 70S ribosome.

Its function is as follows. Located at the top of the head of the 30S subunit, it contacts several helices of the 16S rRNA. In the 70S ribosome it contacts the 23S rRNA (bridge B1a) and protein L5 of the 50S subunit (bridge B1b), connecting the 2 subunits; these bridges are implicated in subunit movement. Contacts the tRNAs in the A and P-sites. This is Small ribosomal subunit protein uS13 from Clostridium botulinum (strain Alaska E43 / Type E3).